The following is a 579-amino-acid chain: Plastidial pyruvate kinase 2 (579 aa).

A chloroplast-targeting transit peptide spans 1 to 63; the sequence is MAQVVATRSI…SRRVVDTTVR (63 aa). Polar residues predominate over residues 6–24; the sequence is ATRSIQGSMLSPNGGSVST. Residues 6–26 form a disordered region; that stretch reads ATRSIQGSMLSPNGGSVSTRS. Residue Arg-140 coordinates substrate. Positions 142, 144, 175, and 176 each coordinate K(+). 142-145 serves as a coordination point for ATP; sequence NMSH. Position 182 (Arg-182) interacts with ATP. Lys-325 contributes to the substrate binding site. Glu-327 is a Mg(2+) binding site. 3 residues coordinate substrate: Gly-350, Asp-351, and Thr-383. Asp-351 is a binding site for Mg(2+).

The protein belongs to the pyruvate kinase family. As to quaternary structure, oligomer of alpha and beta subunits. Mg(2+) serves as cofactor. Requires K(+) as cofactor. As to expression, mostly expressed in seeds, and, to a lower extent, in roots, leaves (veins and trichomes), inflorescences, siliques, pollen (grains and tubes) and flowers (sepals and petals).

Its subcellular location is the plastid. It localises to the chloroplast stroma. The protein localises to the mitochondrion. The catalysed reaction is pyruvate + ATP = phosphoenolpyruvate + ADP + H(+). It functions in the pathway carbohydrate degradation; glycolysis; pyruvate from D-glyceraldehyde 3-phosphate: step 5/5. Required for plastidial pyruvate kinase activity. Involved in seed oil accumulation, embryo development and seed storage compounds mobilization upon germination. The sequence is that of Plastidial pyruvate kinase 2 (PKP2) from Arabidopsis thaliana (Mouse-ear cress).